The sequence spans 134 residues: Small ribosomal subunit protein uS11 (134 aa).

This sequence belongs to the universal ribosomal protein uS11 family. As to quaternary structure, part of the 30S ribosomal subunit. Interacts with proteins S7 and S18. Binds to IF-3.

In terms of biological role, located on the platform of the 30S subunit, it bridges several disparate RNA helices of the 16S rRNA. Forms part of the Shine-Dalgarno cleft in the 70S ribosome. The polypeptide is Small ribosomal subunit protein uS11 (Salinibacter ruber (strain DSM 13855 / M31)).